The following is a 340-amino-acid chain: Ribonucleoside-diphosphate reductase small subunit (340 aa).

Residues Phe-180–Tyr-200 form a helical membrane-spanning segment.

It belongs to the ribonucleoside diphosphate reductase small chain family. As to quaternary structure, heterotetramer composed of a homodimer of the large subunit (R1) and a homodimer of the small subunit (R2). Larger multisubunit protein complex are also active, composed of (R1)n(R2)n. It depends on Fe cation as a cofactor.

It is found in the host membrane. It carries out the reaction a 2'-deoxyribonucleoside 5'-diphosphate + [thioredoxin]-disulfide + H2O = a ribonucleoside 5'-diphosphate + [thioredoxin]-dithiol. Ribonucleoside-diphosphate reductase holoenzyme provides the precursors necessary for viral DNA synthesis. Allows virus growth in non-dividing cells, as well as reactivation from latency in infected hosts. Catalyzes the biosynthesis of deoxyribonucleotides from the corresponding ribonucleotides. The protein is Ribonucleoside-diphosphate reductase small subunit of Human herpesvirus 1 (strain 17) (HHV-1).